The following is a 288-amino-acid chain: MALSFKNSSGSIKAKRIKDGLVNANDIETTVIDFSYEKPDLSSVDGFSLKSLLSSDGWHIVVAYQCVTNSEQLNNNKKNNKTQKFRLFTFDIIVIPGLKPNKSKNVVSYNRFMALCIGMICYHKKWKVFNWTRKSYEDNTSTIDFNEDEDFMNKLAMSAGFSKEHKYHWFYSTGFEYTFDIFPAEVIAMSLFRWSHRVELKIKYTHESDLVEPMVRQLTKKGTISDVMDIIGKSTIAKRYEEIVKDRSSTGIGTKYNDVLDEFKEIIKKINSSSLDSTIKDCLKDIEE.

A2 is subject to N-acetylalanine; by host.

Belongs to the high plain virus capsid family.

It is found in the virion. The sequence is that of Capsid protein from High plains virus (isolate Kansas 2004).